The sequence spans 611 residues: Glutamine--fructose-6-phosphate aminotransferase [isomerizing] (611 aa).

The active-site Nucleophile; for GATase activity is C2. Residues 2-219 (CGIVGGVSKT…DGDVAMLQRQ (218 aa)) enclose the Glutamine amidotransferase type-2 domain. 2 consecutive SIS domains span residues 287–427 (AAAM…APGA) and 460–601 (WAAR…VDRP). Residue K606 is the For Fru-6P isomerization activity of the active site.

Homodimer.

Its subcellular location is the cytoplasm. The catalysed reaction is D-fructose 6-phosphate + L-glutamine = D-glucosamine 6-phosphate + L-glutamate. Functionally, catalyzes the first step in hexosamine metabolism, converting fructose-6P into glucosamine-6P using glutamine as a nitrogen source. This chain is Glutamine--fructose-6-phosphate aminotransferase [isomerizing], found in Acidithiobacillus ferridurans.